We begin with the raw amino-acid sequence, 488 residues long: GlcNAc-binding protein A (488 aa).

The signal sequence occupies residues 1–24 (MIMIITKKTLLPVTLALFSSGVMA). Positions 25–202 (HGYVSSVEGG…SFYNVIDVMF (178 aa)) constitute a Chitin-binding type-4 domain. Positions 439 to 480 (AGSKVLATDGRIYECKPFPYSGYCIQWSPSATQFEPGVGSDW) constitute a Chitin-binding type-3 domain.

The protein belongs to the GbpA family.

It localises to the secreted. Its function is as follows. Probably interacts with GlcNAc residues. May promote attachment to both epithelial cell surfaces and chitin. The sequence is that of GlcNAc-binding protein A from Photobacterium profundum (strain SS9).